A 160-amino-acid chain; its full sequence is CXXC motif containing zinc binding protein (160 aa).

Zn(2+) is bound by residues C33, C36, C67, and C70. At S75 the chain carries Phosphoserine.

The protein belongs to the UPF0587 family. As to quaternary structure, monomer.

This Bos taurus (Bovine) protein is CXXC motif containing zinc binding protein (CZIB).